We begin with the raw amino-acid sequence, 305 residues long: Sulfate adenylyltransferase subunit 2 (305 aa).

The tract at residues 283-305 (RQGRVIDHDQSASMEKKKQEGYF) is disordered.

It belongs to the PAPS reductase family. CysD subfamily. As to quaternary structure, heterodimer composed of CysD, the smaller subunit, and CysN.

The catalysed reaction is sulfate + ATP + H(+) = adenosine 5'-phosphosulfate + diphosphate. It participates in sulfur metabolism; hydrogen sulfide biosynthesis; sulfite from sulfate: step 1/3. With CysN forms the ATP sulfurylase (ATPS) that catalyzes the adenylation of sulfate producing adenosine 5'-phosphosulfate (APS) and diphosphate, the first enzymatic step in sulfur assimilation pathway. APS synthesis involves the formation of a high-energy phosphoric-sulfuric acid anhydride bond driven by GTP hydrolysis by CysN coupled to ATP hydrolysis by CysD. The chain is Sulfate adenylyltransferase subunit 2 from Caulobacter sp. (strain K31).